A 362-amino-acid chain; its full sequence is Cobalt-precorrin-5B C(1)-methyltransferase (362 aa).

Belongs to the CbiD family.

The catalysed reaction is Co-precorrin-5B + S-adenosyl-L-methionine = Co-precorrin-6A + S-adenosyl-L-homocysteine. Its pathway is cofactor biosynthesis; adenosylcobalamin biosynthesis; cob(II)yrinate a,c-diamide from sirohydrochlorin (anaerobic route): step 6/10. In terms of biological role, catalyzes the methylation of C-1 in cobalt-precorrin-5B to form cobalt-precorrin-6A. This is Cobalt-precorrin-5B C(1)-methyltransferase from Synechococcus sp. (strain CC9902).